The chain runs to 432 residues: Enolase (432 aa).

Glutamine 163 provides a ligand contact to (2R)-2-phosphoglycerate. The active-site Proton donor is the glutamate 205. Residues aspartate 242, glutamate 285, and aspartate 312 each coordinate Mg(2+). Lysine 337, arginine 366, serine 367, and lysine 388 together coordinate (2R)-2-phosphoglycerate. The active-site Proton acceptor is lysine 337.

The protein belongs to the enolase family. Mg(2+) is required as a cofactor.

Its subcellular location is the cytoplasm. It is found in the secreted. The protein resides in the cell surface. The catalysed reaction is (2R)-2-phosphoglycerate = phosphoenolpyruvate + H2O. It functions in the pathway carbohydrate degradation; glycolysis; pyruvate from D-glyceraldehyde 3-phosphate: step 4/5. Its function is as follows. Catalyzes the reversible conversion of 2-phosphoglycerate (2-PG) into phosphoenolpyruvate (PEP). It is essential for the degradation of carbohydrates via glycolysis. In Bifidobacterium longum (strain DJO10A), this protein is Enolase.